Consider the following 314-residue polypeptide: 4-hydroxy-3-methylbut-2-enyl diphosphate reductase (314 aa).

Cys12 is a [4Fe-4S] cluster binding site. His41 and His74 together coordinate (2E)-4-hydroxy-3-methylbut-2-enyl diphosphate. Positions 41 and 74 each coordinate dimethylallyl diphosphate. The isopentenyl diphosphate site is built by His41 and His74. Cys96 contributes to the [4Fe-4S] cluster binding site. His124 contributes to the (2E)-4-hydroxy-3-methylbut-2-enyl diphosphate binding site. Dimethylallyl diphosphate is bound at residue His124. His124 is an isopentenyl diphosphate binding site. Glu126 functions as the Proton donor in the catalytic mechanism. (2E)-4-hydroxy-3-methylbut-2-enyl diphosphate is bound at residue Thr167. [4Fe-4S] cluster is bound at residue Cys197. 4 residues coordinate (2E)-4-hydroxy-3-methylbut-2-enyl diphosphate: Ser225, Ser226, Asn227, and Ser269. The dimethylallyl diphosphate site is built by Ser225, Ser226, Asn227, and Ser269. Ser225, Ser226, Asn227, and Ser269 together coordinate isopentenyl diphosphate.

This sequence belongs to the IspH family. [4Fe-4S] cluster is required as a cofactor.

The enzyme catalyses isopentenyl diphosphate + 2 oxidized [2Fe-2S]-[ferredoxin] + H2O = (2E)-4-hydroxy-3-methylbut-2-enyl diphosphate + 2 reduced [2Fe-2S]-[ferredoxin] + 2 H(+). It carries out the reaction dimethylallyl diphosphate + 2 oxidized [2Fe-2S]-[ferredoxin] + H2O = (2E)-4-hydroxy-3-methylbut-2-enyl diphosphate + 2 reduced [2Fe-2S]-[ferredoxin] + 2 H(+). The protein operates within isoprenoid biosynthesis; dimethylallyl diphosphate biosynthesis; dimethylallyl diphosphate from (2E)-4-hydroxy-3-methylbutenyl diphosphate: step 1/1. It functions in the pathway isoprenoid biosynthesis; isopentenyl diphosphate biosynthesis via DXP pathway; isopentenyl diphosphate from 1-deoxy-D-xylulose 5-phosphate: step 6/6. Functionally, catalyzes the conversion of 1-hydroxy-2-methyl-2-(E)-butenyl 4-diphosphate (HMBPP) into a mixture of isopentenyl diphosphate (IPP) and dimethylallyl diphosphate (DMAPP). Acts in the terminal step of the DOXP/MEP pathway for isoprenoid precursor biosynthesis. The sequence is that of 4-hydroxy-3-methylbut-2-enyl diphosphate reductase from Psychromonas ingrahamii (strain DSM 17664 / CCUG 51855 / 37).